The sequence spans 331 residues: Phosphoenolpyruvate transferase (331 aa).

Asp63 is a binding site for 7,8-didemethyl-8-hydroxy-5-deazariboflavin.

Belongs to the CofD family. As to quaternary structure, homodimer. The cofactor is Mg(2+).

It carries out the reaction enolpyruvoyl-2-diphospho-5'-guanosine + 7,8-didemethyl-8-hydroxy-5-deazariboflavin = dehydro coenzyme F420-0 + GMP + H(+). It participates in cofactor biosynthesis; coenzyme F420 biosynthesis. Catalyzes the transfer of the phosphoenolpyruvate moiety from enoylpyruvoyl-2-diphospho-5'-guanosine (EPPG) to 7,8-didemethyl-8-hydroxy-5-deazariboflavin (FO) with the formation of dehydro coenzyme F420-0 and GMP. The chain is Phosphoenolpyruvate transferase from Mycobacterium sp. (strain KMS).